The sequence spans 138 residues: Ribosome maturation factor RimP (138 aa).

The protein belongs to the RimP family.

The protein localises to the cytoplasm. In terms of biological role, required for maturation of 30S ribosomal subunits. The chain is Ribosome maturation factor RimP from Campylobacter curvus (strain 525.92).